Reading from the N-terminus, the 190-residue chain is Histone H5 (190 aa).

Residues 1–29 are disordered; it reads MTESLVLSPAPAKPKRVKASRRSASHPTY. A compositionally biased stretch (basic residues) spans 13-24; that stretch reads KPKRVKASRRSA. 4 positions are modified to phosphoserine: S23, S30, S146, and S167. Positions 25 to 98 constitute an H15 domain; sequence SHPTYSEMIA…GASGSFRLAK (74 aa). The disordered stretch occupies residues 87–190; that stretch reads GVGASGSFRL…SGARKSPKKK (104 aa). Over residues 104-190 the composition is skewed to basic residues; sequence RSPGKKKKAV…SGARKSPKKK (87 aa).

Belongs to the histone H1/H5 family. In terms of tissue distribution, erythroid cells.

It localises to the nucleus. The protein resides in the chromosome. Histone H5 performs the same function as H1, being necessary for the condensation of nucleosome chains into higher order structures, and replaces histone H1 in certain cells. This chain is Histone H5, found in Gallus gallus (Chicken).